The chain runs to 158 residues: Endoribonuclease YbeY (158 aa).

Residues histidine 119, histidine 123, and aspartate 129 each contribute to the Zn(2+) site.

Belongs to the endoribonuclease YbeY family. Requires Zn(2+) as cofactor.

It localises to the cytoplasm. Its function is as follows. Single strand-specific metallo-endoribonuclease involved in late-stage 70S ribosome quality control and in maturation of the 3' terminus of the 16S rRNA. In Chlamydia caviae (strain ATCC VR-813 / DSM 19441 / 03DC25 / GPIC) (Chlamydophila caviae), this protein is Endoribonuclease YbeY.